A 753-amino-acid polypeptide reads, in one-letter code: MDLPCQDWVCHVEQKWAELRSEETERFSLLTDIDAIFNYGLSLICPEDLNILSRISEKFSVKKSPETASEFRQQGNLSFKVKDYPAAVLHYSKGVCHADKNTDELSLCYANRSAALFYQGLYQACLEDIRRSLEAGYPSHLQDKLQTRQTACQNQLRKAEKPNIPHTDHQLSPCQKTVNSTGHLSDGVSVYFSSDKGRHMLVMENKPAGEVVLEDEAYCSVLIPANIFNTGTNKAVETFGTEDRHCHHCLSQSLSFVPCPKCSYARYCGESCQKDAWDQWHQWECPVGADLLAIGVLGHLALRVVLKAGQTEVQMGIKNTKDHVTTYKNDSPVQLSLGGDCGKSLDHTDCFHGSSYMGIYSLLPHVAQHSPASRFLMAITMAVIYGKLQGGPPPNKWMSFKDEGVKASWQPEMSMLGATALRHMMQLRCNAQAITAVRVKEESGMAVQSSSEIRIATAIFPVLSLLNHSCSPNTSISFTTGFQPDPHNQLGCSEGHFDHPKGSRSGVTVTVRASKDLTAGQEILHCYGPHRSRMEVKERQRLLLEQYFFQCVCQACQRDLSEGSPNAKEHTAPGMKCVKCGKPLQSHTDGYTCSWSSCGHQISSADVQNRLQGFQLLLDEAVHLMEQDRLNEALHILQSAFSQANSILTETHPFQGELADALARLYASTGEWSLAASHLKRSLVAIQAQFGEDSIELGRQLFKLAQLHFNGRDGVASLSVIPRARRLLSLHCSPRCEELQELSEMEHCLQGLL.

Residue arginine 112–alanine 114 participates in S-adenosyl-L-methionine binding. The region spanning aspartate 186–glycine 528 is the SET domain. Residues cysteine 246, cysteine 249, cysteine 259, cysteine 262, cysteine 268, cysteine 272, histidine 281, and cysteine 285 each coordinate Zn(2+). The MYND-type zinc finger occupies cysteine 246–cysteine 285. S-adenosyl-L-methionine-binding positions include asparagine 467–histidine 468 and tyrosine 527.

Belongs to the class V-like SAM-binding methyltransferase superfamily.

It is found in the nucleus. The protein resides in the cytoplasm. It carries out the reaction L-lysyl-[protein] + S-adenosyl-L-methionine = N(6)-methyl-L-lysyl-[protein] + S-adenosyl-L-homocysteine + H(+). In terms of biological role, protein-lysine N-methyltransferase. Monomethylates PRMT5, modulating its transcriptional activity. May also act as a histone methyltransferase. Plays a critical role in cardiac development. Acts as a key epigenetic regulator of gene expression during cardiac development via its dual activities as a methyltransferase and negative regulator of HDAC1. This Danio rerio (Zebrafish) protein is Protein-lysine N-methyltransferase SMYD4 (smyd4).